The sequence spans 36 residues: Peptide POLARIS (36 aa).

Belongs to the POLARIS peptide family. As to expression, mostly expressed in the embryonic root from the heart stage and in the seedling primary and lateral root tips, especially in the columella initials and lateral root cap. Also detectable in aerial parts of the seedling, sepals and leaves, principally in vascular tissues of the lamina and petiole.

Its function is as follows. Required for correct root growth and vascular development, probably by modulating both cell division rate in meristems and cell elongation in roots. Negative regulator of the ethylene signaling pathway that modulates microtubule cytoskeleton dynamics and auxin transport and homeostasis, and possibly cytokinin signaling, thus influencing root growth and lateral root development. The chain is Peptide POLARIS (PLS) from Arabidopsis thaliana (Mouse-ear cress).